The following is a 672-amino-acid chain: UvrABC system protein B (672 aa).

Residues A26–Y181 enclose the Helicase ATP-binding domain. Position 39–46 (G39–T46) interacts with ATP. The Beta-hairpin motif lies at Y92–I115. The 163-residue stretch at Q430–V592 folds into the Helicase C-terminal domain. One can recognise a UVR domain in the interval A631 to G666.

It belongs to the UvrB family. Forms a heterotetramer with UvrA during the search for lesions. Interacts with UvrC in an incision complex.

It is found in the cytoplasm. Functionally, the UvrABC repair system catalyzes the recognition and processing of DNA lesions. A damage recognition complex composed of 2 UvrA and 2 UvrB subunits scans DNA for abnormalities. Upon binding of the UvrA(2)B(2) complex to a putative damaged site, the DNA wraps around one UvrB monomer. DNA wrap is dependent on ATP binding by UvrB and probably causes local melting of the DNA helix, facilitating insertion of UvrB beta-hairpin between the DNA strands. Then UvrB probes one DNA strand for the presence of a lesion. If a lesion is found the UvrA subunits dissociate and the UvrB-DNA preincision complex is formed. This complex is subsequently bound by UvrC and the second UvrB is released. If no lesion is found, the DNA wraps around the other UvrB subunit that will check the other stand for damage. The chain is UvrABC system protein B from Coxiella burnetii (strain CbuG_Q212) (Coxiella burnetii (strain Q212)).